The following is a 378-amino-acid chain: Leukosialin (378 aa).

The first 7 residues, 1–7 (WAQVVSQ), serve as a signal peptide directing secretion. The Extracellular portion of the chain corresponds to 8 to 231 (ENLPNTMTML…TVPPRPGSSG (224 aa)). O-linked (GalNAc...) threonine glycosylation is found at threonine 13, threonine 15, and threonine 20. The tract at residues 13 to 33 (TMTMLPFTPNSESPSTSEALS) is disordered. Residues serine 23, serine 25, and serine 27 are each glycosylated (O-linked (GalNAc...) serine). O-linked (GalNAc...) threonine glycosylation is present at threonine 28. Serine 29 and serine 33 each carry an O-linked (GalNAc...) serine glycan. An O-linked (GalNAc...) threonine glycan is attached at threonine 34. O-linked (GalNAc...) serine glycosylation is found at serine 36 and serine 37. Residue threonine 40 is glycosylated (O-linked (GalNAc...) threonine). 2 O-linked (GalNAc...) serine glycosylation sites follow: serine 108 and serine 113. Threonine 118, threonine 120, and threonine 124 each carry an O-linked (GalNAc...) threonine glycan. Serine 125 and serine 126 each carry an O-linked (GalNAc...) serine glycan. O-linked (GalNAc...) threonine glycosylation occurs at threonine 174. Serine 176 and serine 180 each carry an O-linked (GalNAc...) serine glycan. O-linked (GalNAc...) threonine glycosylation is present at threonine 183. Serine 187 is a glycosylation site (O-linked (GalNAc...) serine). Threonine 189 carries an O-linked (GalNAc...) threonine glycan. Residues 232–254 (MLLVSMLIALTVVLVLVALLLLW) traverse the membrane as a helical segment. A required for interaction with EZR, MSN and RDX and for co-localization to microvilli region spans residues 255–285 (RQRQKRRTGALTLSRGGKRNGTVDAWAGPAR). Topologically, residues 255–378 (RQRQKRRTGA…AKDGAAPQSL (124 aa)) are cytoplasmic. The short motif at 259–273 (KRRTGALTLSRGGKR) is the Nuclear localization signal element. The interval 265-378 (LTLSRGGKRN…AKDGAAPQSL (114 aa)) is disordered. Serine 268 carries the phosphoserine modification. Threonine 276 is subject to Phosphothreonine. Residues 310-321 (GSGQRPTLTTFF) are compositionally biased toward polar residues. Residue serine 311 is modified to Phosphoserine. Threonine 316 bears the Phosphothreonine mark. Serine 322 and serine 326 each carry phosphoserine. The residue at position 330 (serine 330) is a Phosphoserine; by PKC/PRKCQ. Serine 354 carries the post-translational modification Phosphoserine. Threonine 361 is subject to Phosphothreonine.

As to quaternary structure, interacts with SIGLEC1. In terms of assembly, monomer. Interacts with CTNNB1. Interacts with EZR, MSN and RDX (via FERM domain). Post-translationally, has a high content of sialic acid and O-linked carbohydrate structures. In terms of processing, phosphorylation at Ser-330 is regulated by chemokines, requires its association with ERM proteins (EZR, RDX and MSN) and is essential for its function in the regulation of T-cell trafficking to lymph nodes. Cleavage by CTSG releases its extracellular domain and triggers its intramembrane proteolysis by gamma-secretase releasing the CD43 cytoplasmic tail chain (CD43-ct) which translocates to the nucleus. Post-translationally, sumoylated. As to expression, cell surface of thymocytes, T-lymphocytes, neutrophils, plasma cells and myelomas.

The protein resides in the membrane. It is found in the cell projection. Its subcellular location is the microvillus. The protein localises to the uropodium. It localises to the nucleus. The protein resides in the PML body. Predominant cell surface sialoprotein of leukocytes which regulates multiple T-cell functions, including T-cell activation, proliferation, differentiation, trafficking and migration. Positively regulates T-cell trafficking to lymph-nodes via its association with ERM proteins (EZR, RDX and MSN). Negatively regulates Th2 cell differentiation and predisposes the differentiation of T-cells towards a Th1 lineage commitment. Promotes the expression of IFN-gamma by T-cells during T-cell receptor (TCR) activation of naive cells and induces the expression of IFN-gamma by CD4(+) T-cells and to a lesser extent by CD8(+) T-cells. Plays a role in preparing T-cells for cytokine sensing and differentiation into effector cells by inducing the expression of cytokine receptors IFNGR and IL4R, promoting IFNGR and IL4R signaling and by mediating the clustering of IFNGR with TCR. Acts as a major E-selectin ligand responsible for Th17 cell rolling on activated vasculature and recruitment during inflammation. Mediates Th17 cells, but not Th1 cells, adhesion to E-selectin. Acts as a T-cell counter-receptor for SIGLEC1. Its function is as follows. Protects cells from apoptotic signals, promoting cell survival. The polypeptide is Leukosialin (Spn) (Rattus norvegicus (Rat)).